The chain runs to 106 residues: MEYIYASLLLHSAKKEISEDALKNVLTAAGISVDEVRLKAVVAALKEVNIDEVLKNAAAMPVAVAAQPQATQAQPAAEEKKEEKKEEEKKGPSEEEIASGLASLFG.

Residues 66–76 are compositionally biased toward low complexity; the sequence is AQPQATQAQPA. A disordered region spans residues 66–106; the sequence is AQPQATQAQPAAEEKKEEKKEEEKKGPSEEEIASGLASLFG. Positions 77 to 93 are enriched in basic and acidic residues; the sequence is AEEKKEEKKEEEKKGPS.

This sequence belongs to the eukaryotic ribosomal protein P1/P2 family. In terms of assembly, part of the 50S ribosomal subunit. Homodimer, it forms part of the ribosomal stalk which helps the ribosome interact with GTP-bound translation factors. Forms a heptameric uL10/P0(P1)2(P1)2(P1)2 complex, where uL10/P0 forms an elongated spine to which the P1 dimers bind in a sequential fashion.

Forms part of the ribosomal stalk, playing a central role in the interaction of the ribosome with GTP-bound translation factors. The polypeptide is Large ribosomal subunit protein P1 (Saccharolobus solfataricus (strain ATCC 35092 / DSM 1617 / JCM 11322 / P2) (Sulfolobus solfataricus)).